A 317-amino-acid polypeptide reads, in one-letter code: tRNA pseudouridine synthase B (317 aa).

Asp-47 serves as the catalytic Nucleophile.

Belongs to the pseudouridine synthase TruB family. Type 1 subfamily.

It catalyses the reaction uridine(55) in tRNA = pseudouridine(55) in tRNA. Functionally, responsible for synthesis of pseudouridine from uracil-55 in the psi GC loop of transfer RNAs. The sequence is that of tRNA pseudouridine synthase B from Shewanella woodyi (strain ATCC 51908 / MS32).